The following is a 247-amino-acid chain: Aliphatic sulfonates import ATP-binding protein SsuB 3 (247 aa).

The ABC transporter domain occupies 13–227; sequence VRVRGAGRAF…SVVDPEFSAL (215 aa). 45 to 52 serves as a coordination point for ATP; sequence GASGSGKS.

The protein belongs to the ABC transporter superfamily. Aliphatic sulfonates importer (TC 3.A.1.17.2) family. The complex is composed of two ATP-binding proteins (SsuB), two transmembrane proteins (SsuC) and a solute-binding protein (SsuA).

The protein localises to the cell membrane. It carries out the reaction ATP + H2O + aliphatic sulfonate-[sulfonate-binding protein]Side 1 = ADP + phosphate + aliphatic sulfonateSide 2 + [sulfonate-binding protein]Side 1.. In terms of biological role, part of the ABC transporter complex SsuABC involved in aliphatic sulfonates import. Responsible for energy coupling to the transport system. The chain is Aliphatic sulfonates import ATP-binding protein SsuB 3 from Nocardia farcinica (strain IFM 10152).